The sequence spans 291 residues: Elongation factor Ts (291 aa).

Residues 82-85 form an involved in Mg(2+) ion dislocation from EF-Tu region; that stretch reads TDFC.

The protein belongs to the EF-Ts family.

The protein resides in the cytoplasm. Its function is as follows. Associates with the EF-Tu.GDP complex and induces the exchange of GDP to GTP. It remains bound to the aminoacyl-tRNA.EF-Tu.GTP complex up to the GTP hydrolysis stage on the ribosome. This Methylobacillus flagellatus (strain ATCC 51484 / DSM 6875 / VKM B-1610 / KT) protein is Elongation factor Ts.